A 303-amino-acid chain; its full sequence is N-acetyl-D-glucosamine kinase (303 aa).

ATP is bound by residues 4–11 (GFDIGGTK) and 133–140 (GVGGGLVL). His-157, Cys-177, Cys-179, and Cys-184 together coordinate Zn(2+).

The protein belongs to the ROK (NagC/XylR) family. NagK subfamily.

It carries out the reaction N-acetyl-D-glucosamine + ATP = N-acetyl-D-glucosamine 6-phosphate + ADP + H(+). The protein operates within cell wall biogenesis; peptidoglycan recycling. Functionally, catalyzes the phosphorylation of N-acetyl-D-glucosamine (GlcNAc) derived from cell-wall degradation, yielding GlcNAc-6-P. The sequence is that of N-acetyl-D-glucosamine kinase from Salmonella choleraesuis (strain SC-B67).